The chain runs to 519 residues: 2,3-bisphosphoglycerate-independent phosphoglycerate mutase (519 aa).

Mn(2+) is bound by residues Asp18 and Ser68. Catalysis depends on Ser68, which acts as the Phosphoserine intermediate. Residues His129, 159 to 160, Arg191, Arg197, 267 to 270, and Lys341 contribute to the substrate site; these read RD and RADR. Positions 408, 412, 449, 450, and 468 each coordinate Mn(2+).

The protein belongs to the BPG-independent phosphoglycerate mutase family. In terms of assembly, monomer. Mn(2+) is required as a cofactor.

The enzyme catalyses (2R)-2-phosphoglycerate = (2R)-3-phosphoglycerate. It functions in the pathway carbohydrate degradation; glycolysis; pyruvate from D-glyceraldehyde 3-phosphate: step 3/5. Catalyzes the interconversion of 2-phosphoglycerate and 3-phosphoglycerate. This Coxiella burnetii (strain Dugway 5J108-111) protein is 2,3-bisphosphoglycerate-independent phosphoglycerate mutase.